The following is a 188-amino-acid chain: Putative 3-methyladenine DNA glycosylase (188 aa).

It belongs to the DNA glycosylase MPG family.

This chain is Putative 3-methyladenine DNA glycosylase, found in Ehrlichia ruminantium (strain Gardel).